The primary structure comprises 276 residues: MSKKSEKRATAVAAVVVCLVVLLTAVGPAMVTARPANEIPVESVLAEDQPQQPTSEAWNSVPAVEVPMASAPSGLPNASDTSIETLRVQSARTEERLYVRLSWADGTADRNISGPQQFVDAAAVQVPVNTTARPPISMGSTRNPVNVWYWRADGETEELLAGGPGTTTKFEQSAVETKTAYDDGRWTIVMSRELNSDAENRTSFAANDDVDVAFAVWNGSQMERSGRKSVSEWYHFPFGPGPQGPPYESILWTVAGLAIVGVALVTIQAVQKNGGD.

Heme b-binding residues include Met138 and Lys228.

As to quaternary structure, probable multiprotein complex; a catalytic heterodimer of an alpha and beta chain is proposed to associate with additional subunits involved in membrane attachment and electron transfer. Requires heme b as cofactor.

The protein localises to the cell membrane. In terms of biological role, the respiratory membrane-bound nitrate reductase enzyme complex plays a role in generation of metabolic energy by using nitrate as a terminal electron acceptor during anaerobic conditions. May transfer electrons to the iron-sulfur centers of the catalytic beta subunit. The protein is Putative respiratory nitrate reductase heme subunit ORF7 of Haloferax mediterranei (strain ATCC 33500 / DSM 1411 / JCM 8866 / NBRC 14739 / NCIMB 2177 / R-4) (Halobacterium mediterranei).